A 699-amino-acid chain; its full sequence is DNA ligase (699 aa).

The tract at residues 1 to 29 is disordered; the sequence is MSDADVDAESNPYLRDPPTEFEPAESLSR. NAD(+) is bound by residues 60 to 64, 108 to 109, and glutamate 137; these read DAAYD and SI. The N6-AMP-lysine intermediate role is filled by lysine 139. Positions 160, 196, 311, and 335 each coordinate NAD(+). The Zn(2+) site is built by cysteine 425, cysteine 428, cysteine 441, and cysteine 447. The BRCT domain maps to 613-666; that stretch reads SGGDELDGLTFVVTGTLAASRSDVTELVESHGGNVTGSVSGNTDYLVVGENPGR.

The protein belongs to the NAD-dependent DNA ligase family. LigA subfamily. Mg(2+) is required as a cofactor. It depends on Mn(2+) as a cofactor.

The catalysed reaction is NAD(+) + (deoxyribonucleotide)n-3'-hydroxyl + 5'-phospho-(deoxyribonucleotide)m = (deoxyribonucleotide)n+m + AMP + beta-nicotinamide D-nucleotide.. Its activity is regulated as follows. Displays maximal in vitro activity at high salt levels. DNA ligase that catalyzes the formation of phosphodiester linkages between 5'-phosphoryl and 3'-hydroxyl groups in double-stranded DNA using NAD as a coenzyme and as the energy source for the reaction. It is essential for DNA replication and repair of damaged DNA. The chain is DNA ligase from Haloferax volcanii (strain ATCC 29605 / DSM 3757 / JCM 8879 / NBRC 14742 / NCIMB 2012 / VKM B-1768 / DS2) (Halobacterium volcanii).